The chain runs to 150 residues: MADKFHILVLNGPNLNMLGTREPEKYGSLTLSEIVNRLSTEATSLNVELDHFQSNAEYAIIDRIHQAKDTVDYILINPAAFTHTSVAIRDALLAVSIPFIEIHLSNVHAREPFRHHSYLSDIAAGVICGLGADGYSYALQTAVKRLSQSH.

Residue Tyr-26 is the Proton acceptor of the active site. Residues Asn-77, His-83, and Asp-90 each contribute to the substrate site. His-103 (proton donor) is an active-site residue. Substrate-binding positions include 104–105 (LS) and Arg-114.

The protein belongs to the type-II 3-dehydroquinase family. As to quaternary structure, homododecamer.

The catalysed reaction is 3-dehydroquinate = 3-dehydroshikimate + H2O. It participates in metabolic intermediate biosynthesis; chorismate biosynthesis; chorismate from D-erythrose 4-phosphate and phosphoenolpyruvate: step 3/7. Functionally, catalyzes a trans-dehydration via an enolate intermediate. The protein is 3-dehydroquinate dehydratase of Enterobacter sp. (strain 638).